We begin with the raw amino-acid sequence, 103 residues long: Putative double-stranded DNA mimic protein HD_0986 (103 aa).

It belongs to the putative dsDNA mimic protein family.

Functionally, may act as a double-stranded DNA (dsDNA) mimic. Probably regulates the activity of a dsDNA-binding protein. The sequence is that of Putative double-stranded DNA mimic protein HD_0986 from Haemophilus ducreyi (strain 35000HP / ATCC 700724).